Here is a 317-residue protein sequence, read N- to C-terminus: Acetyl-coenzyme A carboxylase carboxyl transferase subunit alpha (317 aa).

The 255-residue stretch at 39–293 (KLEAKAQKAL…KEAVVEALGA (255 aa)) folds into the CoA carboxyltransferase C-terminal domain.

Belongs to the AccA family. Acetyl-CoA carboxylase is a heterohexamer composed of biotin carboxyl carrier protein (AccB), biotin carboxylase (AccC) and two subunits each of ACCase subunit alpha (AccA) and ACCase subunit beta (AccD).

It is found in the cytoplasm. It carries out the reaction N(6)-carboxybiotinyl-L-lysyl-[protein] + acetyl-CoA = N(6)-biotinyl-L-lysyl-[protein] + malonyl-CoA. It participates in lipid metabolism; malonyl-CoA biosynthesis; malonyl-CoA from acetyl-CoA: step 1/1. Functionally, component of the acetyl coenzyme A carboxylase (ACC) complex. First, biotin carboxylase catalyzes the carboxylation of biotin on its carrier protein (BCCP) and then the CO(2) group is transferred by the carboxyltransferase to acetyl-CoA to form malonyl-CoA. The polypeptide is Acetyl-coenzyme A carboxylase carboxyl transferase subunit alpha (Beijerinckia indica subsp. indica (strain ATCC 9039 / DSM 1715 / NCIMB 8712)).